The sequence spans 230 residues: 5'-methylthioadenosine/S-adenosylhomocysteine nucleosidase (230 aa).

The active-site Proton acceptor is glutamate 12. Substrate-binding positions include glycine 78, isoleucine 153, and 174–175; that span reads ME. The active-site Proton donor is aspartate 198.

Belongs to the PNP/UDP phosphorylase family. MtnN subfamily.

The enzyme catalyses S-adenosyl-L-homocysteine + H2O = S-(5-deoxy-D-ribos-5-yl)-L-homocysteine + adenine. The catalysed reaction is S-methyl-5'-thioadenosine + H2O = 5-(methylsulfanyl)-D-ribose + adenine. It carries out the reaction 5'-deoxyadenosine + H2O = 5-deoxy-D-ribose + adenine. It participates in amino-acid biosynthesis; L-methionine biosynthesis via salvage pathway; S-methyl-5-thio-alpha-D-ribose 1-phosphate from S-methyl-5'-thioadenosine (hydrolase route): step 1/2. In terms of biological role, catalyzes the irreversible cleavage of the glycosidic bond in both 5'-methylthioadenosine (MTA) and S-adenosylhomocysteine (SAH/AdoHcy) to adenine and the corresponding thioribose, 5'-methylthioribose and S-ribosylhomocysteine, respectively. Also cleaves 5'-deoxyadenosine, a toxic by-product of radical S-adenosylmethionine (SAM) enzymes, into 5-deoxyribose and adenine. The polypeptide is 5'-methylthioadenosine/S-adenosylhomocysteine nucleosidase (Shewanella halifaxensis (strain HAW-EB4)).